A 478-amino-acid polypeptide reads, in one-letter code: Noelin-2 (478 aa).

The first 16 residues, 1 to 16, serve as a signal peptide directing secretion; that stretch reads MSVPLLKIGAVLSTMA. N-linked (GlcNAc...) asparagine glycans are attached at residues asparagine 33, asparagine 98, asparagine 179, asparagine 299, asparagine 334, asparagine 423, and asparagine 465. Coiled-coil stretches lie at residues 86–109 and 160–218; these read SREL…LELR and LEQY…QKLG. The 253-residue stretch at 218–470 folds into the Olfactomedin-like domain; sequence GCGKLTGVSN…QVLYNVTLFH (253 aa). The cysteines at positions 219 and 401 are disulfide-linked.

Peripherally associated with AMPAR complex. AMPAR complex consists of an inner core made of 4 pore-forming GluA/GRIA proteins (GRIA1, GRIA2, GRIA3 and GRIA4) and 4 major auxiliary subunits arranged in a twofold symmetry. One of the two pairs of distinct binding sites is occupied either by CNIH2, CNIH3 or CACNG2, CACNG3. The other harbors CACNG2, CACNG3, CACNG4, CACNG8 or GSG1L. This inner core of AMPAR complex is complemented by outer core constituents binding directly to the GluA/GRIA proteins at sites distinct from the interaction sites of the inner core constituents. Outer core constituents include at least PRRT1, PRRT2, CKAMP44/SHISA9, FRRS1L and NRN1. The proteins of the inner and outer core serve as a platform for other, more peripherally associated AMPAR constituents, including OLFM2. Alone or in combination, these auxiliary subunits control the gating and pharmacology of the AMPAR complex and profoundly impact their biogenesis and protein processing. Interacts with GRIA2. Interacts with OLFM1 and OLFM3. Interacts with SRF; the interaction promotes dissociation of SRF from the transcriptional repressor HEY2. Interacts with RUNX2. As to expression, expressed in the brain (at protein level). Expressed in carotid arteries and the aorta, mainly in aortic SMCs.

The protein resides in the secreted. It localises to the synapse. Its subcellular location is the membrane. The protein localises to the nucleus. It is found in the cytoplasm. Its function is as follows. Involved in transforming growth factor beta (TGF-beta)-induced smooth muscle differentiation. TGF-beta induces expression and nuclear translocation of OLFM2 where it binds to SRF, causing its dissociation from the transcriptional repressor HEY2/HERP1 and facilitating binding of SRF to target genes. Plays a role in AMPAR complex organization. Is a regulator of vascular smooth-muscle cell (SMC) phenotypic switching, that acts by promoting RUNX2 and inhibiting MYOCD binding to SRF. SMC phenotypic switching is the process through which vascular SMCs undergo transition between a quiescent contractile phenotype and a proliferative synthetic phenotype in response to pathological stimuli. SMC phenotypic plasticity is essential for vascular development and remodeling. The polypeptide is Noelin-2 (Olfm2) (Rattus norvegicus (Rat)).